Consider the following 314-residue polypeptide: Ribosomal RNA small subunit methyltransferase H (314 aa).

S-adenosyl-L-methionine contacts are provided by residues 35-37 (GGH), D55, F79, D101, and Q108. The interval 276 to 296 (QGGQTLKPVGKKLMPSEAEVA) is disordered.

Belongs to the methyltransferase superfamily. RsmH family.

It localises to the cytoplasm. It catalyses the reaction cytidine(1402) in 16S rRNA + S-adenosyl-L-methionine = N(4)-methylcytidine(1402) in 16S rRNA + S-adenosyl-L-homocysteine + H(+). Functionally, specifically methylates the N4 position of cytidine in position 1402 (C1402) of 16S rRNA. This Pectobacterium atrosepticum (strain SCRI 1043 / ATCC BAA-672) (Erwinia carotovora subsp. atroseptica) protein is Ribosomal RNA small subunit methyltransferase H.